A 420-amino-acid chain; its full sequence is Serine--tRNA ligase (420 aa).

227–229 (TSE) is a binding site for L-serine. ATP contacts are provided by residues 258-260 (RRE) and Val-274. An L-serine-binding site is contributed by Glu-281. Residue 345 to 348 (ELTS) coordinates ATP. Thr-380 lines the L-serine pocket.

Belongs to the class-II aminoacyl-tRNA synthetase family. Type-1 seryl-tRNA synthetase subfamily. As to quaternary structure, homodimer. The tRNA molecule binds across the dimer.

The protein resides in the cytoplasm. The enzyme catalyses tRNA(Ser) + L-serine + ATP = L-seryl-tRNA(Ser) + AMP + diphosphate + H(+). It catalyses the reaction tRNA(Sec) + L-serine + ATP = L-seryl-tRNA(Sec) + AMP + diphosphate + H(+). It participates in aminoacyl-tRNA biosynthesis; selenocysteinyl-tRNA(Sec) biosynthesis; L-seryl-tRNA(Sec) from L-serine and tRNA(Sec): step 1/1. Its function is as follows. Catalyzes the attachment of serine to tRNA(Ser). Is also able to aminoacylate tRNA(Sec) with serine, to form the misacylated tRNA L-seryl-tRNA(Sec), which will be further converted into selenocysteinyl-tRNA(Sec). In Nocardia farcinica (strain IFM 10152), this protein is Serine--tRNA ligase.